Here is an 81-residue protein sequence, read N- to C-terminus: ATP synthase subunit c (81 aa).

Helical transmembrane passes span 5–25 (IAAGALIGGGLIMAGGAIGAG) and 57–77 (VGLVEAAYFINLAFMALFVFA).

It belongs to the ATPase C chain family. As to quaternary structure, F-type ATPases have 2 components, F(1) - the catalytic core - and F(0) - the membrane proton channel. F(1) has five subunits: alpha(3), beta(3), gamma(1), delta(1), epsilon(1). F(0) has three main subunits: a(1), b(2) and c(10-14). The alpha and beta chains form an alternating ring which encloses part of the gamma chain. F(1) is attached to F(0) by a central stalk formed by the gamma and epsilon chains, while a peripheral stalk is formed by the delta and b chains.

It localises to the cell membrane. Its function is as follows. F(1)F(0) ATP synthase produces ATP from ADP in the presence of a proton or sodium gradient. F-type ATPases consist of two structural domains, F(1) containing the extramembraneous catalytic core and F(0) containing the membrane proton channel, linked together by a central stalk and a peripheral stalk. During catalysis, ATP synthesis in the catalytic domain of F(1) is coupled via a rotary mechanism of the central stalk subunits to proton translocation. Key component of the F(0) channel; it plays a direct role in translocation across the membrane. A homomeric c-ring of between 10-14 subunits forms the central stalk rotor element with the F(1) delta and epsilon subunits. This Mycobacterium bovis (strain ATCC BAA-935 / AF2122/97) protein is ATP synthase subunit c.